The sequence spans 388 residues: MSEQIVTPESSTPVVSNNEAKINLLDLNRQQMREFFKNLGEKPFRADQVMKWMYHYCCDNFDEMTDINKVLRGKLKEVAEIRAPEVVEEQRSSDGTIKWAIAVGDQRVETVYIPEDDRATLCVSSQVGCALECKFCSTAQQGFNRNLRVSEIIGQVWRAAKIVGAAKVTGQRPITNVVMMGMGEPLLNLTNVVPAMEIMLDDFGFGLSKRRVTLSTSGVVPALDKLGDMIDVALAISLHAPNDAIRDEIVPINKKYNIETFLGAVRRYLEKSNANQGRVTIEYVMLDHVNDGTEHAHQLAELLKETPCKINLIPWNPFPGAPYGRSSNSRIDRFSKVLMSYGFTTIVRKTRGDDIDAACGQLAGDVIDRTKRTLRKRMQGEAIDIKAI.

E109 serves as the catalytic Proton acceptor. Residues 115–354 (EDDRATLCVS…TIVRKTRGDD (240 aa)) form the Radical SAM core domain. C122 and C359 form a disulfide bridge. The [4Fe-4S] cluster site is built by C129, C133, and C136. Residues 183-184 (GE), S215, 237-239 (SLH), and N316 each bind S-adenosyl-L-methionine. C359 functions as the S-methylcysteine intermediate in the catalytic mechanism.

It belongs to the radical SAM superfamily. RlmN family. Requires [4Fe-4S] cluster as cofactor.

The protein localises to the cytoplasm. It carries out the reaction adenosine(2503) in 23S rRNA + 2 reduced [2Fe-2S]-[ferredoxin] + 2 S-adenosyl-L-methionine = 2-methyladenosine(2503) in 23S rRNA + 5'-deoxyadenosine + L-methionine + 2 oxidized [2Fe-2S]-[ferredoxin] + S-adenosyl-L-homocysteine. The catalysed reaction is adenosine(37) in tRNA + 2 reduced [2Fe-2S]-[ferredoxin] + 2 S-adenosyl-L-methionine = 2-methyladenosine(37) in tRNA + 5'-deoxyadenosine + L-methionine + 2 oxidized [2Fe-2S]-[ferredoxin] + S-adenosyl-L-homocysteine. Functionally, specifically methylates position 2 of adenine 2503 in 23S rRNA and position 2 of adenine 37 in tRNAs. m2A2503 modification seems to play a crucial role in the proofreading step occurring at the peptidyl transferase center and thus would serve to optimize ribosomal fidelity. The chain is Dual-specificity RNA methyltransferase RlmN from Salmonella arizonae (strain ATCC BAA-731 / CDC346-86 / RSK2980).